The following is a 162-amino-acid chain: Ribosome maturation factor RimP (162 aa).

It belongs to the RimP family.

It localises to the cytoplasm. Its function is as follows. Required for maturation of 30S ribosomal subunits. The chain is Ribosome maturation factor RimP from Cupriavidus pinatubonensis (strain JMP 134 / LMG 1197) (Cupriavidus necator (strain JMP 134)).